A 289-amino-acid chain; its full sequence is Diaminopimelate epimerase (289 aa).

Substrate-binding residues include Asn-11 and Asn-78. Residue Cys-87 is the Proton donor of the active site. Substrate is bound by residues 88 to 89 (GN), Asn-163, Asn-199, and 217 to 218 (ER). Cys-226 serves as the catalytic Proton acceptor. 227–228 (GT) lines the substrate pocket.

It belongs to the diaminopimelate epimerase family. In terms of assembly, homodimer.

It localises to the cytoplasm. It carries out the reaction (2S,6S)-2,6-diaminopimelate = meso-2,6-diaminopimelate. The protein operates within amino-acid biosynthesis; L-lysine biosynthesis via DAP pathway; DL-2,6-diaminopimelate from LL-2,6-diaminopimelate: step 1/1. Functionally, catalyzes the stereoinversion of LL-2,6-diaminopimelate (L,L-DAP) to meso-diaminopimelate (meso-DAP), a precursor of L-lysine and an essential component of the bacterial peptidoglycan. The polypeptide is Diaminopimelate epimerase (Rhodococcus jostii (strain RHA1)).